The following is a 547-amino-acid chain: KsdD-like steroid dehydrogenase MSMEG_5835 (547 aa).

Residue 5-36 (DVIVVGAGLAGLVAACELVERGHSVIIVDQEN) coordinates FAD.

It belongs to the FAD-dependent oxidoreductase 2 family. It depends on FAD as a cofactor.

Its pathway is lipid metabolism; steroid biosynthesis. Functionally, able to catalyze the elimination of the C-1 and C-2 hydrogen atoms of the A-ring from the polycyclic ring structure of 3-ketosteroids, but the ketosteroid dehydrogenase activity is low compared to KsdD in the cholesterol degradation process. The low activity could be due to different substrate specificity. This Mycolicibacterium smegmatis (strain ATCC 700084 / mc(2)155) (Mycobacterium smegmatis) protein is KsdD-like steroid dehydrogenase MSMEG_5835.